Consider the following 346-residue polypeptide: GTPase Obg (346 aa).

The Obg domain maps to 1–159; the sequence is MRFVDRCRLK…RELRLELKVL (159 aa). Residues 122–147 form a disordered region; sequence KGGRGNLHFKSPHDRAPRRAEPGEPG. Positions 132–147 are enriched in basic and acidic residues; it reads SPHDRAPRRAEPGEPG. The 177-residue stretch at 160 to 336 folds into the OBG-type G domain; that stretch reads ADVGLLGFPN…LVRELAALAR (177 aa). Residues 166–173, 191–195, 218–221, 288–291, and 317–319 contribute to the GTP site; these read GFPNAGKS, FTTLT, DIPG, TKAD, and SAA. The Mg(2+) site is built by Ser173 and Thr193.

This sequence belongs to the TRAFAC class OBG-HflX-like GTPase superfamily. OBG GTPase family. Monomer. The cofactor is Mg(2+).

It localises to the cytoplasm. Its function is as follows. An essential GTPase which binds GTP, GDP and possibly (p)ppGpp with moderate affinity, with high nucleotide exchange rates and a fairly low GTP hydrolysis rate. Plays a role in control of the cell cycle, stress response, ribosome biogenesis and in those bacteria that undergo differentiation, in morphogenesis control. The sequence is that of GTPase Obg from Sorangium cellulosum (strain So ce56) (Polyangium cellulosum (strain So ce56)).